A 130-amino-acid polypeptide reads, in one-letter code: Small ribosomal subunit protein uS9 (130 aa).

Residues 105 to 130 (TRDSRMKERKKPGLKGARRAPQFSKR) are disordered. Residues 111–130 (KERKKPGLKGARRAPQFSKR) are compositionally biased toward basic residues.

This sequence belongs to the universal ribosomal protein uS9 family.

This Listeria welshimeri serovar 6b (strain ATCC 35897 / DSM 20650 / CCUG 15529 / CIP 8149 / NCTC 11857 / SLCC 5334 / V8) protein is Small ribosomal subunit protein uS9.